Reading from the N-terminus, the 636-residue chain is Epsin-3 (636 aa).

The a 1,2-diacyl-sn-glycero-3-phospho-(1D-myo-inositol-4,5-bisphosphate) site is built by arginine 8, lysine 11, arginine 25, asparagine 30, arginine 63, and histidine 73. The ENTH domain occupies 12 to 144 (NIVHNYSEAE…KDEERLRQER (133 aa)). The disordered stretch occupies residues 153–503 (RMALEGMGIG…TPESFLGPSA (351 aa)). Residues 174 to 189 (GSPSSYTSASSSPRYA) are compositionally biased toward low complexity. Phosphoserine is present on residues serine 184 and serine 185. 2 UIM domains span residues 202-221 (EEEL…AERP) and 229-248 (DEDL…HEKG). Composition is skewed to basic and acidic residues over residues 214 to 231 (SREE…RDED) and 242 to 256 (RQEH…KGDD). Serine 257 is subject to Phosphoserine. Residues 270–288 (RQRDREPEREERKEEEKLK) are compositionally biased toward basic and acidic residues. A run of 5 repeats spans residues 315 to 317 (DPW), 338 to 340 (DPW), 365 to 367 (EPW), 381 to 383 (DPW), and 398 to 400 (DPW). Positions 315-400 (DPWDIPGLRP…KLPSTGADPW (86 aa)) are 5 X 3 AA repeats of [DE]-P-W. Over residues 426–435 (ESTEPKESRD) the composition is skewed to basic and acidic residues. A run of 2 repeats spans residues 523–525 (NPF) and 536–538 (NPF). The 3 X 3 AA repeats of N-P-F stretch occupies residues 523-635 (NPFLTGLGVP…LPPQAGTNPF (113 aa)). Positions 607–616 (PPPASLPQPL) are enriched in pro residues. The interval 607-636 (PPPASLPQPLLPTSGPMGPLPPQAGTNPFL) is disordered. Repeat 3 spans residues 633–635 (NPF).

It belongs to the epsin family.

It is found in the cytoplasm. Its subcellular location is the cell cortex. The protein localises to the perinuclear region. It localises to the cytoplasmic vesicle. The protein resides in the clathrin-coated vesicle. The chain is Epsin-3 (Epn3) from Mus musculus (Mouse).